The chain runs to 356 residues: Nitric oxide synthase oxygenase (356 aa).

Residue Cys-63 participates in heme binding.

Belongs to the NOS family. Bacterial NOS oxygenase subfamily. Homodimer. Forms a complex with trpS2; one homodimer of trpS2 binds one homodimer of nos. Heme serves as cofactor. Requires (6S)-5,6,7,8-tetrahydrofolate as cofactor.

The catalysed reaction is 3 reduced [flavodoxin] + 2 L-arginine + 4 O2 = 3 oxidized [flavodoxin] + 2 L-citrulline + 2 nitric oxide + 4 H2O + 5 H(+). Nitric oxide synthase activity is increased by trpS2. Functionally, catalyzes the production of nitric oxide. The complex between TrpRS II and nitric oxide synthase oxygenase catalyzes the regioselective nitration of tryptophan at the 4-position. This is Nitric oxide synthase oxygenase (nos) from Deinococcus radiodurans (strain ATCC 13939 / DSM 20539 / JCM 16871 / CCUG 27074 / LMG 4051 / NBRC 15346 / NCIMB 9279 / VKM B-1422 / R1).